A 246-amino-acid polypeptide reads, in one-letter code: Probable transcriptional regulatory protein HS_0508 (246 aa).

The protein belongs to the TACO1 family.

Its subcellular location is the cytoplasm. This Histophilus somni (strain 129Pt) (Haemophilus somnus) protein is Probable transcriptional regulatory protein HS_0508.